The primary structure comprises 251 residues: 2,3-bisphosphoglycerate-dependent phosphoglycerate mutase (251 aa).

Substrate is bound by residues 7–14 (RHGESEWN), 20–21 (TG), Arg-59, 86–89 (ERHY), Lys-97, 113–114 (RR), and 186–187 (GN). Catalysis depends on His-8, which acts as the Tele-phosphohistidine intermediate. Glu-86 acts as the Proton donor/acceptor in catalysis.

The protein belongs to the phosphoglycerate mutase family. BPG-dependent PGAM subfamily.

It carries out the reaction (2R)-2-phosphoglycerate = (2R)-3-phosphoglycerate. The protein operates within carbohydrate degradation; glycolysis; pyruvate from D-glyceraldehyde 3-phosphate: step 3/5. In terms of biological role, catalyzes the interconversion of 2-phosphoglycerate and 3-phosphoglycerate. In Treponema pallidum (strain Nichols), this protein is 2,3-bisphosphoglycerate-dependent phosphoglycerate mutase.